The primary structure comprises 85 residues: MGGISIWQLLIIALIVVLLFGTKKLRSLGGDLGGAVKGFKNAMSSEEDKKALEDAEAAKPVQTAQTAQPTQQATEKKPESNKEQA.

Residues 1–21 (MGGISIWQLLIIALIVVLLFG) traverse the membrane as a helical segment. The disordered stretch occupies residues 43–85 (MSSEEDKKALEDAEAAKPVQTAQTAQPTQQATEKKPESNKEQA). Residues 46 to 57 (EEDKKALEDAEA) are compositionally biased toward basic and acidic residues. Low complexity predominate over residues 58–73 (AKPVQTAQTAQPTQQA). Positions 74-85 (TEKKPESNKEQA) are enriched in basic and acidic residues.

Belongs to the TatA/E family. The Tat system comprises two distinct complexes: a TatABC complex, containing multiple copies of TatA, TatB and TatC subunits, and a separate TatA complex, containing only TatA subunits. Substrates initially bind to the TatABC complex, which probably triggers association of the separate TatA complex to form the active translocon.

It localises to the cell inner membrane. Its function is as follows. Part of the twin-arginine translocation (Tat) system that transports large folded proteins containing a characteristic twin-arginine motif in their signal peptide across membranes. TatA could form the protein-conducting channel of the Tat system. This Shewanella sp. (strain MR-4) protein is Sec-independent protein translocase protein TatA.